Here is a 551-residue protein sequence, read N- to C-terminus: Oleuropein beta-glucosidase (551 aa).

Polar residues predominate over residues 1 to 27 (MDIQSNVLTITSGSTPTDTSSNGQAAK). The segment at 1-33 (MDIQSNVLTITSGSTPTDTSSNGQAAKSTKERI) is disordered. Residues Gln52, His156, 201–202 (NE), Tyr363, Glu433, Trp482, 489–490 (EW), and Phe498 contribute to the a beta-D-glucoside site. Glu202 serves as the catalytic Proton donor. The Nucleophile role is filled by Glu433. The segment at 502–551 (YVDYANGRYTRLPKRSAVWWRNFLTKPTAVPLKNEPEKSEDRRKRLRGST) is required for the homomultimerization. The disordered stretch occupies residues 532 to 551 (PLKNEPEKSEDRRKRLRGST). Residues 535–544 (NEPEKSEDRR) show a composition bias toward basic and acidic residues. Positions 542–550 (DRRKRLRGS) match the Nuclear localization signal motif.

Belongs to the glycosyl hydrolase 1 family. As to quaternary structure, homomultimer. Native form of the enzyme requires at least an octamer conformation. As to expression, expressed in expanding leaves and in young drupes, mostly in the developing seed coat tissues, the perisperm and the mesocarp. Also detected in shoot and root meristems, flower buds, developing ovaries and tapetal cells of the anther. Not detected in embryos or endosperm, or in leaf trichomes.

It localises to the nucleus. The enzyme catalyses oleuropein + H2O = oleuropein aglycone + D-glucose. In terms of biological role, major beta-glucosidase activating oleuropein into a potent protein cross-linking agent. No activity with rutin, luteolin or p-nitrophenyl-beta-glucopyranoside as substrates. This chain is Oleuropein beta-glucosidase, found in Olea europaea (Common olive).